A 382-amino-acid chain; its full sequence is Putative acetyl-CoA C-acetyltransferase VraB (382 aa).

Cys86 serves as the catalytic Acyl-thioester intermediate. Residue His338 is the Proton acceptor of the active site.

This sequence belongs to the thiolase-like superfamily. Thiolase family.

The chain is Putative acetyl-CoA C-acetyltransferase VraB (vraB) from Staphylococcus epidermidis (strain ATCC 35984 / DSM 28319 / BCRC 17069 / CCUG 31568 / BM 3577 / RP62A).